A 192-amino-acid polypeptide reads, in one-letter code: Thymidylate kinase (192 aa).

Glycine 7–serine 14 provides a ligand contact to ATP.

The protein belongs to the thymidylate kinase family.

It carries out the reaction dTMP + ATP = dTDP + ADP. Functionally, phosphorylation of dTMP to form dTDP in both de novo and salvage pathways of dTTP synthesis. In Campylobacter jejuni subsp. doylei (strain ATCC BAA-1458 / RM4099 / 269.97), this protein is Thymidylate kinase.